The primary structure comprises 328 residues: MAAPVASLNPALAGIDSLFSAFPSSSSLPLGVAYSGGADSTALLLAAAERWPGQVQAFHIHHGLQAAADDFVRVCESVCAKAGLPLHIVQVDARHASGESPEDAARRARYAALATAATARGMQGVLLGQHADDQVETMLLALSRGAGLPGLSAMPASFGRGGMVFYRPLLHIPSAVLREWLVEQPIEFVDDPTNTDERYTRNRIRARLLPALAQAFPQFHATFARSARHAAQAQAVLVEVAAQDLAVVGNPPAIKALQALSPPRQANVLRHWLLLQYATPSAAQLEQLLHQVAACTTRGHRIHLKVASGHVTRLGGSLCYSDAAARAC.

35–40 (SGGADS) is a binding site for ATP.

This sequence belongs to the tRNA(Ile)-lysidine synthase family.

It is found in the cytoplasm. It catalyses the reaction cytidine(34) in tRNA(Ile2) + L-lysine + ATP = lysidine(34) in tRNA(Ile2) + AMP + diphosphate + H(+). In terms of biological role, ligates lysine onto the cytidine present at position 34 of the AUA codon-specific tRNA(Ile) that contains the anticodon CAU, in an ATP-dependent manner. Cytidine is converted to lysidine, thus changing the amino acid specificity of the tRNA from methionine to isoleucine. The polypeptide is tRNA(Ile)-lysidine synthase (Polaromonas naphthalenivorans (strain CJ2)).